We begin with the raw amino-acid sequence, 304 residues long: Acetylglutamate kinase (304 aa).

Substrate-binding positions include Gly-72–Gly-73, Arg-94, and Asn-199.

This sequence belongs to the acetylglutamate kinase family. ArgB subfamily.

It is found in the cytoplasm. It carries out the reaction N-acetyl-L-glutamate + ATP = N-acetyl-L-glutamyl 5-phosphate + ADP. Its pathway is amino-acid biosynthesis; L-arginine biosynthesis; N(2)-acetyl-L-ornithine from L-glutamate: step 2/4. Functionally, catalyzes the ATP-dependent phosphorylation of N-acetyl-L-glutamate. The polypeptide is Acetylglutamate kinase (Methylobacterium nodulans (strain LMG 21967 / CNCM I-2342 / ORS 2060)).